A 309-amino-acid polypeptide reads, in one-letter code: Ornithine carbamoyltransferase (309 aa).

Residues 56 to 59 (STRT), Gln-83, Arg-107, and 134 to 137 (HPCQ) contribute to the carbamoyl phosphate site. L-ornithine-binding positions include Asn-165, Asp-223, and 227-228 (SM). Residues 263-264 (CL) and Arg-291 contribute to the carbamoyl phosphate site.

Belongs to the aspartate/ornithine carbamoyltransferase superfamily. OTCase family.

The protein resides in the cytoplasm. The enzyme catalyses carbamoyl phosphate + L-ornithine = L-citrulline + phosphate + H(+). It participates in amino-acid biosynthesis; L-arginine biosynthesis; L-arginine from L-ornithine and carbamoyl phosphate: step 1/3. Functionally, reversibly catalyzes the transfer of the carbamoyl group from carbamoyl phosphate (CP) to the N(epsilon) atom of ornithine (ORN) to produce L-citrulline. The protein is Ornithine carbamoyltransferase of Burkholderia mallei (strain ATCC 23344).